Here is a 331-residue protein sequence, read N- to C-terminus: Laforin (331 aa).

In terms of domain architecture, CBM20 spans 1–124; the sequence is MLFRFGVVVP…NNLVDGVYCL (124 aa). Position 25 is a phosphoserine; by AMPK (Ser-25). Substrate contacts are provided by residues Trp-32, Lys-87, 103–107, Asp-197, Asp-235, and Arg-241; that span reads GPHHD. One can recognise a Tyrosine-protein phosphatase domain in the interval 156 to 323; it reads HYSRILPNIW…QQDFFQKFGK (168 aa). Cys-266 acts as the Phosphocysteine intermediate in catalysis. A Glucan phosphatase signature motif CXAGXGR motif is present at residues 266–272; it reads CNAGVGR. Residues 267 to 272 and Tyr-304 each bind substrate; that span reads NAGVGR.

Belongs to the protein-tyrosine phosphatase family. Homodimer. Interacts with itself. Interacts with PPP1R3B, PPP1R3C, PPP1R3D, HIRIP5, and EPM2AIP1. Binds glycogen and Lafora bodies. Interacts with NHLRC1/malin (via the NHL repeats). Forms a complex with NHLRC1/malin and HSP70. Interacts with PPP1R3D; in the presence of NHLC1/malin the interaction leads to ubiquitination and autophagic degradation of PPP1R3D. Interacts (via the phosphatase domain) with MAPT/Tau; the interaction dephosphorylates MAPT. Interacts with PRDM8. Post-translationally, polyubiquitinated by NHLRC1/malin. In terms of processing, phosphorylation on Ser-25 by AMPK affects the phosphatase activity of the enzyme and its ability to homodimerize and interact with NHLRC1, PPP1R3C or PRKAA2. As to expression, widely expressed.

It localises to the cytoplasm. The protein resides in the endoplasmic reticulum membrane. The protein localises to the cell membrane. The catalysed reaction is O-phospho-L-tyrosyl-[protein] + H2O = L-tyrosyl-[protein] + phosphate. It catalyses the reaction O-phospho-L-seryl-[protein] + H2O = L-seryl-[protein] + phosphate. The enzyme catalyses O-phospho-L-threonyl-[protein] + H2O = L-threonyl-[protein] + phosphate. Plays an important role in preventing glycogen hyperphosphorylation and the formation of insoluble aggregates, via its activity as glycogen phosphatase, and by promoting the ubiquitination of proteins involved in glycogen metabolism via its interaction with the E3 ubiquitin ligase NHLRC1/malin. Dephosphorylates phosphotyrosine and synthetic substrates, such as para-nitrophenylphosphate (pNPP), and has low activity with phosphoserine and phosphothreonine substrates (in vitro). Has also been shown to dephosphorylate MAPT. Shows strong phosphatase activity towards complex carbohydrates in vitro, avoiding glycogen hyperphosphorylation which is associated with reduced branching and formation of insoluble aggregates. Forms a complex with NHLRC1/malin and HSP70, which suppresses the cellular toxicity of misfolded proteins by promoting their degradation through the ubiquitin-proteasome system (UPS). Acts as a scaffold protein to facilitate PPP1R3C/PTG ubiquitination by NHLRC1/malin. Also promotes proteasome-independent protein degradation through the macroautophagy pathway. In Rattus norvegicus (Rat), this protein is Laforin (Epm2a).